The chain runs to 64 residues: MKTKEINELTTAEMLDKEKSYKDELFNLRFQLATGQLENTARLKQVRKNIARLKTALRQQELNK.

It belongs to the universal ribosomal protein uL29 family.

This is Large ribosomal subunit protein uL29 from Levilactobacillus brevis (strain ATCC 367 / BCRC 12310 / CIP 105137 / JCM 1170 / LMG 11437 / NCIMB 947 / NCTC 947) (Lactobacillus brevis).